Here is a 134-residue protein sequence, read N- to C-terminus: Beta-synuclein (134 aa).

2 tandem repeats follow at residues 20–30 (EKTKQGVTEAA) and 31–41 (EKTKEGVLYVG). A 4 X 11 AA tandem repeats of [EGS]-K-T-K-[EQ]-[GQ]-V-X(4) region spans residues 20-67 (EKTKQGVTEAAEKTKEGVLYVGSKTREGVVQGVASVAEKTKEQASHLG). A 3; approximate repeat occupies 42 to 56 (SKTREGVVQGVASVA). Repeat 4 spans residues 57–67 (EKTKEQASHLG). The segment at 89 to 134 (FPTDLKPEEVAQEAAEEPLIEPLMEPEGESYEDPPQEEYQEYEPEA) is disordered. The segment covering 98 to 134 (VAQEAAEEPLIEPLMEPEGESYEDPPQEEYQEYEPEA) has biased composition (acidic residues). Ser118 carries the phosphoserine; by BARK1, CK2 and GRK5 modification.

It belongs to the synuclein family. In terms of processing, phosphorylated. Phosphorylation by G-protein coupled receptor kinases (GRK) is more efficient than phosphorylation by CK1, CK2 and CaM-kinase II. As to expression, expressed predominantly in brain; concentrated in presynaptic nerve terminals.

The protein resides in the cytoplasm. Non-amyloid component of senile plaques found in Alzheimer disease. Could act as a regulator of SNCA aggregation process. Protects neurons from staurosporine and 6-hydroxy dopamine (6OHDA)-stimulated caspase activation in a p53/TP53-dependent manner. Contributes to restore the SNCA anti-apoptotic function abolished by 6OHDA. Not found in the Lewy bodies associated with Parkinson disease. This is Beta-synuclein (SNCB) from Homo sapiens (Human).